The primary structure comprises 307 residues: Ornithine carbamoyltransferase (307 aa).

Carbamoyl phosphate-binding positions include 53–56, Gln80, Arg104, and 131–134; these read STRT and HPCQ. L-ornithine is bound by residues Asn162, Asp220, and 224–225; that span reads SM. Carbamoyl phosphate is bound by residues 260-261 and Arg288; that span reads CL.

It belongs to the aspartate/ornithine carbamoyltransferase superfamily. OTCase family.

The protein localises to the cytoplasm. The catalysed reaction is carbamoyl phosphate + L-ornithine = L-citrulline + phosphate + H(+). The protein operates within amino-acid biosynthesis; L-arginine biosynthesis; L-arginine from L-ornithine and carbamoyl phosphate: step 1/3. Functionally, reversibly catalyzes the transfer of the carbamoyl group from carbamoyl phosphate (CP) to the N(epsilon) atom of ornithine (ORN) to produce L-citrulline. The polypeptide is Ornithine carbamoyltransferase (Nitrosomonas eutropha (strain DSM 101675 / C91 / Nm57)).